Reading from the N-terminus, the 1050-residue chain is Integrin alpha-5 (1050 aa).

Positions 1 to 32 (MQLPRGSRVPGLVATFLFPVLCALLTFSSVRG) are cleaved as a signal peptide. Topologically, residues 33–996 (FNLAVEQPAV…IHWAKPESSY (964 aa)) are extracellular. 7 FG-GAP repeats span residues 34–99 (NLAV…GTNC), 116–175 (DTPQ…NFTT), 183–235 (RTDF…QEAY), 249–301 (QTRQ…GTDL), 302–367 (RSLY…MEST), 368–426 (PHLI…GVDS), and 430–493 (QVLQ…ISPN). N-linked (GlcNAc...) asparagine glycans are attached at residues asparagine 75, asparagine 95, and asparagine 98. 2 cysteine pairs are disulfide-bonded: cysteine 90-cysteine 99 and cysteine 145-cysteine 166. N-linked (GlcNAc...) asparagine glycosylation is present at asparagine 172. Cysteine 182 and cysteine 195 are joined by a disulfide. Ca(2+) contacts are provided by glutamate 270, serine 272, aspartate 274, threonine 276, and aspartate 278. 3 N-linked (GlcNAc...) asparagine glycosylation sites follow: asparagine 287, asparagine 297, and asparagine 306. Positions 324, 326, 328, 330, 332, 390, 392, 394, 398, 454, 456, 458, 460, and 462 each coordinate Ca(2+). Cysteines 502 and 513 form a disulfide. 4 N-linked (GlcNAc...) asparagine glycosylation sites follow: asparagine 507, asparagine 515, asparagine 521, and asparagine 600. The cysteines at positions 519 and 575 are disulfide-linked. Residues cysteine 636 and cysteine 642 are joined by a disulfide bond. N-linked (GlcNAc...) asparagine glycans are attached at residues asparagine 649, asparagine 714, asparagine 763, and asparagine 861. Cysteine 708 and cysteine 721 are joined by a disulfide. Cystine bridges form between cysteine 839–cysteine 958, cysteine 862–cysteine 922, and cysteine 910–cysteine 917. The helical transmembrane segment at 997–1022 (GVPLWIIILAILIGLLLLALLIYVLY) threads the bilayer. Topologically, residues 1023–1050 (KLGFFKRSYQYGTAMEKAELKPQAASEA) are cytoplasmic. The GFFKR motif motif lies at 1025-1029 (GFFKR).

Belongs to the integrin alpha chain family. In terms of assembly, heterodimer of an alpha and a beta subunit. The alpha subunit is composed of a heavy and a light chain linked by a disulfide bond. Alpha-5 associates with beta-1.

The protein localises to the cell membrane. It localises to the cell junction. The protein resides in the focal adhesion. Its function is as follows. Integrin alpha-5/beta-1 (ITGA5:ITGB1) is a receptor for fibronectin. It recognizes the sequence R-G-D in its ligands. ITGA5:ITGB1 acts as a receptor for fibrillin-1 (FBN1) and mediates R-G-D-dependent cell adhesion to FBN1. ITGA5:ITGB1 acts as a receptor for fibronectin (FN1) and mediates R-G-D-dependent cell adhesion to FN1. ITGA5:ITGB1 is a receptor for IL1B and binding is essential for IL1B signaling. ITGA5:ITGB3 is a receptor for soluble CD40LG and is required for CD40/CD40LG signaling. The sequence is that of Integrin alpha-5 (itga5) from Xenopus laevis (African clawed frog).